The primary structure comprises 299 residues: Prohibitin-2 (299 aa).

Residue Ala2 is modified to N-acetylalanine. The necessary for transcriptional repression stretch occupies residues 19–49; sequence MGTALKLLLGAGAVAYGIRESVFTVEGGHRA. At Tyr128 the chain carries Phosphotyrosine. Lys147 bears the N6-acetyllysine mark. The segment at 150-174 is necessary for transcriptional repression; sequence ASQLITQRAQVSLLIRRELTERAKD. Ser151 carries the phosphoserine modification. Residues 190 to 238 adopt a coiled-coil conformation; that stretch reads SREYTAAVEAKQVAQQEAQRAQFLVEKAKQEQRQKIVQAEGEAEAARML. N6-acetyllysine is present on residues Lys200, Lys250, and Lys262.

This sequence belongs to the prohibitin family. In terms of assembly, the mitochondrial prohibitin complex consists of two subunits (PHB1 and PHB2), assembled into a membrane-associated ring-shaped supercomplex of approximately 1 mDa. Interacts with ESR1, HDAC1 and HDAC5. Interacts with ZNF703. Interacts with STOML2. Interacts with ARFGEF3. Interacts with SPHK2. Interacts with COX4I1; the interaction associates PHB2 with COX. Interacts with MAP1LC3B (membrane-bound form LC3-II); the interaction is direct and upon mitochondrial depolarization and proteasome-dependent outer membrane rupture. Interacts with IGFBP6 (via C-terminal domain). Interacts with CLPB. Interacts with CD86 (via cytoplasmic domain); the interactions increases after priming with CD40. Interacts with AFG3L2. Interacts with DNAJC19. Interacts with AKT2; this interaction may be important for myogenic differentiation. Phosphorylated. Tyrosine phosphorylation is indirectly stimulated by IGFBP6.

The protein resides in the mitochondrion inner membrane. The protein localises to the cytoplasm. It is found in the nucleus. It localises to the cell membrane. In terms of biological role, protein with pleiotropic attributes mediated in a cell-compartment- and tissue-specific manner, which include the plasma membrane-associated cell signaling functions, mitochondrial chaperone, and transcriptional co-regulator of transcription factors and sex steroid hormones in the nucleus. Functionally, in the mitochondria, together with PHB, forms large ring complexes (prohibitin complexes) in the inner mitochondrial membrane (IMM) and functions as a chaperone protein that stabilizes mitochondrial respiratory enzymes and maintains mitochondrial integrity in the IMM, which is required for mitochondrial morphogenesis, neuronal survival, and normal lifespan. The prohibitin complex, with DNAJC19, regulates cardiolipin remodeling and the protein turnover of OMA1 in a cardiolipin-binding manner. Also regulates cytochrome-c oxidase assembly (COX) and mitochondrial respiration. Binding to sphingoid 1-phosphate (SPP) modulates its regulator activity. Has a key role of mitophagy receptor involved in targeting mitochondria for autophagic degradation. Involved in mitochondrial-mediated antiviral innate immunity, activates RIG-I-mediated signal transduction and production of IFNB1 and pro-inflammatory cytokine IL6. Its function is as follows. In the nucleus, serves as transcriptional co-regulator. Acts as a mediator of transcriptional repression by nuclear hormone receptors via recruitment of histone deacetylases. Functions as an estrogen receptor (ER)-selective coregulator that potentiates the inhibitory activities of antiestrogens and represses the activity of estrogens. Competes with NCOA1 for modulation of ER transcriptional activity. In the plasma membrane, is involved in IGFBP6-induced cell migration. Cooperates with CD86 to mediate CD86-signaling in B lymphocytes that regulates the level of IgG1 produced through the activation of distal signaling intermediates. Upon CD40 engagement, required to activate NF-kappa-B signaling pathway via phospholipase C and protein kinase C activation. The protein is Prohibitin-2 (PHB2) of Bos taurus (Bovine).